The sequence spans 418 residues: Tyrosine--tRNA ligase (418 aa).

Tyr-34 serves as a coordination point for L-tyrosine. The 'HIGH' region signature appears at Pro-39–His-48. Positions 169 and 173 each coordinate L-tyrosine. The 'KMSKS' region motif lies at Lys-229–Ser-233. Residue Lys-232 participates in ATP binding. An S4 RNA-binding domain is found at His-352 to Tyr-418.

Belongs to the class-I aminoacyl-tRNA synthetase family. TyrS type 1 subfamily. In terms of assembly, homodimer.

It localises to the cytoplasm. It carries out the reaction tRNA(Tyr) + L-tyrosine + ATP = L-tyrosyl-tRNA(Tyr) + AMP + diphosphate + H(+). Its function is as follows. Catalyzes the attachment of tyrosine to tRNA(Tyr) in a two-step reaction: tyrosine is first activated by ATP to form Tyr-AMP and then transferred to the acceptor end of tRNA(Tyr). This chain is Tyrosine--tRNA ligase, found in Streptococcus pyogenes serotype M49 (strain NZ131).